We begin with the raw amino-acid sequence, 130 residues long: Small ribosomal subunit protein uS9 (130 aa).

It belongs to the universal ribosomal protein uS9 family.

In Vibrio campbellii (strain ATCC BAA-1116), this protein is Small ribosomal subunit protein uS9.